Consider the following 390-residue polypeptide: S-adenosylmethionine synthase (390 aa).

Glu-12 contributes to the Mg(2+) binding site. An ATP-binding site is contributed by His-18. Residue Glu-46 coordinates K(+). 2 residues coordinate L-methionine: Glu-59 and Gln-102. Residues 170 to 172 (DGK), 238 to 241 (SGRF), Asp-249, 255 to 256 (RK), Ala-272, Lys-276, and Lys-280 each bind ATP. Residue Asp-249 participates in L-methionine binding. Residue Lys-280 participates in L-methionine binding.

This sequence belongs to the AdoMet synthase family. Homotetramer. It depends on Mn(2+) as a cofactor. Mg(2+) serves as cofactor. The cofactor is Co(2+). K(+) is required as a cofactor.

The protein resides in the cytoplasm. The catalysed reaction is L-methionine + ATP + H2O = S-adenosyl-L-methionine + phosphate + diphosphate. Its pathway is amino-acid biosynthesis; S-adenosyl-L-methionine biosynthesis; S-adenosyl-L-methionine from L-methionine: step 1/1. Functionally, catalyzes the formation of S-adenosylmethionine from methionine and ATP. The reaction comprises two steps that are both catalyzed by the same enzyme: formation of S-adenosylmethionine (AdoMet) and triphosphate, and subsequent hydrolysis of the triphosphate. The sequence is that of S-adenosylmethionine synthase (METM) from Chlamydomonas reinhardtii (Chlamydomonas smithii).